A 160-amino-acid chain; its full sequence is Cytochrome b6-f complex subunit 4 (160 aa).

Topologically, residues 1–35 are cytoplasmic; it reads MATLKKPDLSDPKLRAKLAKGMGHNYYGEPAWPND. A helical transmembrane segment spans residues 36-56; that stretch reads LLYVFPVVIMGTFACIVALSV. Residues 57-94 are Lumenal, thylakoid-facing; it reads LDPAMVGEPADPFATPLEILPEWYLYPVFQILRSVPNK. Residues 95–115 form a helical membrane-spanning segment; the sequence is LLGVLLMASVPLGLILVPFIE. At 116–130 the chain is on the cytoplasmic side; sequence NVNKFQNPFRRPVAT. A helical transmembrane segment spans residues 131 to 151; sequence TIFLFGTLVTIWLGIGATFPL. Topologically, residues 152–160 are lumenal, thylakoid; sequence DKTLTLGLF.

It belongs to the cytochrome b family. PetD subfamily. As to quaternary structure, the 4 large subunits of the cytochrome b6-f complex are cytochrome b6, subunit IV (17 kDa polypeptide, PetD), cytochrome f and the Rieske protein, while the 4 small subunits are PetG, PetL, PetM and PetN. The complex functions as a dimer.

The protein resides in the cellular thylakoid membrane. Component of the cytochrome b6-f complex, which mediates electron transfer between photosystem II (PSII) and photosystem I (PSI), cyclic electron flow around PSI, and state transitions. This is Cytochrome b6-f complex subunit 4 from Mastigocladus laminosus (Fischerella sp.).